The primary structure comprises 592 residues: Aspartate--tRNA(Asp/Asn) ligase (592 aa).

Glu175 serves as a coordination point for L-aspartate. Residues Gln199–Lys202 form an aspartate region. Positions 221 and 451 each coordinate L-aspartate. Residue Arg221 to Glu223 coordinates ATP. Residue Glu485 participates in ATP binding. Arg492 contributes to the L-aspartate binding site. Gly537–Arg540 serves as a coordination point for ATP.

This sequence belongs to the class-II aminoacyl-tRNA synthetase family. Type 1 subfamily. As to quaternary structure, homodimer.

It is found in the cytoplasm. It carries out the reaction tRNA(Asx) + L-aspartate + ATP = L-aspartyl-tRNA(Asx) + AMP + diphosphate. In terms of biological role, aspartyl-tRNA synthetase with relaxed tRNA specificity since it is able to aspartylate not only its cognate tRNA(Asp) but also tRNA(Asn). Reaction proceeds in two steps: L-aspartate is first activated by ATP to form Asp-AMP and then transferred to the acceptor end of tRNA(Asp/Asn). The chain is Aspartate--tRNA(Asp/Asn) ligase from Phenylobacterium zucineum (strain HLK1).